The chain runs to 37 residues: Large ribosomal subunit protein bL36 (37 aa).

The protein belongs to the bacterial ribosomal protein bL36 family.

In Mesomycoplasma hyopneumoniae (strain 7448) (Mycoplasma hyopneumoniae), this protein is Large ribosomal subunit protein bL36.